The primary structure comprises 831 residues: Translation initiation factor IF-2 (831 aa).

The 171-residue stretch at 329-499 (TRAPVVTVMG…LLIAEMQDLK (171 aa)) folds into the tr-type G domain. The segment at 338–345 (GHVDHGKT) is G1. Residue 338-345 (GHVDHGKT) participates in GTP binding. Residues 363–367 (GITQH) are G2. A G3 region spans residues 385–388 (DTPG). Residues 385 to 389 (DTPGH) and 439 to 442 (NKID) contribute to the GTP site. Residues 439–442 (NKID) form a G4 region. Residues 475–477 (SAL) are G5.

It belongs to the TRAFAC class translation factor GTPase superfamily. Classic translation factor GTPase family. IF-2 subfamily.

The protein resides in the cytoplasm. In terms of biological role, one of the essential components for the initiation of protein synthesis. Protects formylmethionyl-tRNA from spontaneous hydrolysis and promotes its binding to the 30S ribosomal subunits. Also involved in the hydrolysis of GTP during the formation of the 70S ribosomal complex. The polypeptide is Translation initiation factor IF-2 (Rickettsia rickettsii (strain Iowa)).